The primary structure comprises 48 residues: Large ribosomal subunit protein bL32 (48 aa).

Positions 1–20 (MAVPKRRVSKTRAAKRRTHY) are enriched in basic residues. The tract at residues 1-48 (MAVPKRRVSKTRAAKRRTHYKVSLPMPIKDKDGSYKMPHRANPTTKEY) is disordered.

This sequence belongs to the bacterial ribosomal protein bL32 family.

In Campylobacter jejuni subsp. jejuni serotype O:2 (strain ATCC 700819 / NCTC 11168), this protein is Large ribosomal subunit protein bL32 (rpmF).